The sequence spans 384 residues: Protein V (384 aa).

2 disordered regions span residues 1-23 (MDQD…GGRE) and 38-318 (SEPT…KKGH). Over residues 7–20 (ILKEDSEVEREAPG) the composition is skewed to basic and acidic residues. A compositionally biased stretch (polar residues) spans 50 to 59 (LHNTINTPQG). Ser-68 bears the Phosphoserine; by host mark. Basic and acidic residues predominate over residues 83-101 (RSGEESRVSGRTSKPEAEA). Ser-125 is modified (phosphoserine; by host). The segment covering 150 to 168 (GIEDENREMAAHPDKRGED) has biased composition (basic and acidic residues). A compositionally biased stretch (polar residues) spans 191–206 (ASNNGRSMEPGSSHSA). 4 positions are modified to phosphoserine; by host: Ser-192, Ser-249, Ser-257, and Ser-260. 8 residues coordinate Zn(2+): His-318, Cys-337, Cys-341, Cys-353, Cys-355, Cys-358, Cys-362, and Cys-365.

It belongs to the paramyxoviruses V protein family. In terms of assembly, interacts with host IFIH1/MDA5 and DHX58/LGP2. Interacts with host IRF3. Interacts with host RIGI regulatory protein (via CARDs domain) and host TRIM25 (via SPRY domain); these interactions prevent TRIM25-mediated ubiquitination of RIG-I and disrupts downstream RIG-I signaling.

It localises to the host cytoplasm. In terms of biological role, plays an essential role in the inhibition of host immune response. Prevents the establishment of cellular antiviral state by blocking interferon-alpha/beta (IFN-alpha/beta) production and signaling pathway. Interacts with host IFIH1/MDA5 and DHX58/LGP2 to inhibit the transduction pathway involved in the activation of IFN-beta promoter, thus protecting the virus against cell antiviral state. Also interacts with and inhibits host IRF3. Blocks the type I interferon signaling pathway by disrupting the RIG-I signaling pathway. The sequence is that of Protein V (P/V/C) from Sendai virus (strain Harris) (SeV).